We begin with the raw amino-acid sequence, 310 residues long: UDP-N-acetylenolpyruvoylglucosamine reductase (310 aa).

The FAD-binding PCMH-type domain maps to 30-200 (RVGGPAQWLA…VAAEFQLEPG (171 aa)). Arg-179 is an active-site residue. The active-site Proton donor is Ser-230. The active site involves Glu-300.

Belongs to the MurB family. It depends on FAD as a cofactor.

It is found in the cytoplasm. The catalysed reaction is UDP-N-acetyl-alpha-D-muramate + NADP(+) = UDP-N-acetyl-3-O-(1-carboxyvinyl)-alpha-D-glucosamine + NADPH + H(+). It functions in the pathway cell wall biogenesis; peptidoglycan biosynthesis. Cell wall formation. The polypeptide is UDP-N-acetylenolpyruvoylglucosamine reductase (Synechococcus sp. (strain WH7803)).